The primary structure comprises 275 residues: DNA repair protein RecO (275 aa).

The interval 1–38 is disordered; it reads MTDEADADPQPFAAPPATGAPAADKPARKPRRAAPRTS. Positions 8-24 are enriched in low complexity; that stretch reads DPQPFAAPPATGAPAAD.

Belongs to the RecO family.

In terms of biological role, involved in DNA repair and RecF pathway recombination. This is DNA repair protein RecO from Burkholderia pseudomallei (strain 1710b).